Consider the following 472-residue polypeptide: Violaxanthin de-epoxidase, chloroplastic (472 aa).

6 cysteine pairs are disulfide-bonded: Cys133-Cys151, Cys138-Cys145, Cys157-Cys174, Cys161-Cys170, Cys189-Cys196, and Cys242-Cys372. Residues 379–462 (VERLEKTVEE…MEAGEVEKLF (84 aa)) are a coiled coil.

Belongs to the calycin superfamily. Lipocalin family. Post-translationally, disulfide bonds. Reduction of the disulfides results in loss of a rigid structure, a decrease in thermal stability of 15 degrees Celsius and a loss of activity.

It is found in the plastid. Its subcellular location is the chloroplast thylakoid membrane. It carries out the reaction all-trans-violaxanthin + 2 L-ascorbate = all-trans-zeaxanthin + 2 L-dehydroascorbate + 2 H2O. Its activity is regulated as follows. Irreversibly inhibited by DTT and iodoacetamide at pH 5.7 or pH 5.2, but not at pH 7.2. Regulated through Ca(2+) gating of H(+) flux at the CFoH(+) channel. Requires the presence of lipids forming reverse hexagonal structures such as monogalactosyldiacylglyceride (MGDG) or phosphatidylethanolamine. A negative curvature elastic stress in the thylakoid lipid bilayer is required for VDE1 activity. Functionally, part of the xanthophyll (or violaxanthin) cycle for controlling the concentration of zeaxanthin in chloroplasts. Catalyzes the two-step mono de-epoxidation reaction. Stereospecific for all-trans xanthophylls. Zeaxanthin induces the dissipation of excitation energy in the chlorophyll of the light-harvesting protein complex of photosystem II. In Spinacia oleracea (Spinach), this protein is Violaxanthin de-epoxidase, chloroplastic.